The primary structure comprises 279 residues: MAFQGTSRTLTQQSSAATSDDLQKILFSPEAIKKMATECDLGRHHWMRADNAISVRPLVPEVTHGRIASFFKSGYDVGELCSKGYMSVPQVLCAVTRTVSTDAEGSLRIYLADLGDKELSPIDGQCVSLHNHDLPALVSFQPTYDCPMETVGNRKRCFAVVIERHGYIGYTGTTASVCSNWQARFSSKNNNYTHIAAGKTLVLPFNRLAEQTKPSAVARLLKSQLNNIESSQYLLTNVKINQNARSESEDLNVESPPAAIGRFSASRSEAFRPQVVNGL.

This sequence belongs to the cucumovirus movement protein family.

The protein resides in the host cell junction. The protein localises to the host plasmodesma. Transports viral genome to neighboring plant cells directly through plasmosdesmata, without any budding. The movement protein allows efficient cell to cell propagation, by bypassing the host cell wall barrier. Acts by forming a tubular structure at the host plasmodesmata, enlarging it enough to allow free passage of virion capsids. This chain is Movement protein, found in Cucumber mosaic virus (strain M) (CMV).